A 624-amino-acid polypeptide reads, in one-letter code: Bifunctional 3'-phosphoadenosine 5'-phosphosulfate synthase 1 (624 aa).

N-acetylmethionine is present on Met-1. Positions 1 to 225 are adenylyl-sulfate kinase; it reads MELPGSLCKK…VVELLQERDI (225 aa). Lys-12 carries the N6-acetyllysine modification. 62–67 is a binding site for ATP; the sequence is GAGKTT. Adenosine 5'-phosphosulfate-binding positions include 89–92, Phe-101, 106–109, 132–133, Lys-171, and 184–185; these read DNIR, REEN, IS, and GF. ATP contacts are provided by residues Cys-207, Cys-212, 419-422, 521-525, and Ala-563; these read QLRN and GRDPA. Positions 234-624 are sulfate adenylyltransferase; it reads VKELYVPENK…AEYYKALEKA (391 aa).

This sequence in the N-terminal section; belongs to the APS kinase family. It in the C-terminal section; belongs to the sulfate adenylyltransferase family. As to quaternary structure, homodimer.

It carries out the reaction sulfate + ATP + H(+) = adenosine 5'-phosphosulfate + diphosphate. It catalyses the reaction adenosine 5'-phosphosulfate + ATP = 3'-phosphoadenylyl sulfate + ADP + H(+). It functions in the pathway sulfur metabolism; sulfate assimilation. Functionally, bifunctional enzyme with both ATP sulfurylase and APS kinase activity, which mediates two steps in the sulfate activation pathway. The first step is the transfer of a sulfate group to ATP to yield adenosine 5'-phosphosulfate (APS), and the second step is the transfer of a phosphate group from ATP to APS yielding 3'-phosphoadenylylsulfate (PAPS: activated sulfate donor used by sulfotransferase). In mammals, PAPS is the sole source of sulfate; APS appears to be only an intermediate in the sulfate-activation pathway. Required for normal biosynthesis of sulfated L-selectin ligands in endothelial cells. This chain is Bifunctional 3'-phosphoadenosine 5'-phosphosulfate synthase 1 (PAPSS1), found in Cavia porcellus (Guinea pig).